The sequence spans 211 residues: Thymidylate kinase (211 aa).

An ATP-binding site is contributed by 10-17 (GGDGVGKS).

This sequence belongs to the thymidylate kinase family.

It catalyses the reaction dTMP + ATP = dTDP + ADP. In terms of biological role, phosphorylation of dTMP to form dTDP in both de novo and salvage pathways of dTTP synthesis. This Clavibacter sepedonicus (Clavibacter michiganensis subsp. sepedonicus) protein is Thymidylate kinase.